A 980-amino-acid chain; its full sequence is Envelope glycoprotein B (980 aa).

The segment covering 1–14 has biased composition (polar residues); it reads MSSGCRSVGGSTWG. Disordered stretches follow at residues 1–20 and 88–118; these read MSSG…RGDG and TTPS…TETP. An N-terminal signal peptide occupies residues 1 to 86; the sequence is MSSGCRSVGG…LFGSCVVRAV (86 aa). At 87–849 the chain is on the virion surface side; the sequence is PTTPSPPTST…SGIASFLNNP (763 aa). Residues 96–118 are compositionally biased toward low complexity; the sequence is TPTSMSTHSHGTVDPTLLPTETP. Disulfide bonds link Cys140/Cys647, Cys157/Cys603, Cys231/Cys296, Cys389/Cys437, and Cys668/Cys708. Asn165 carries an N-linked (GlcNAc...) asparagine; by host glycan. Residues 197–203 form an involved in fusion and/or binding to host membrane region; the sequence is VWKGYSH. N-linked (GlcNAc...) asparagine; by host glycosylation occurs at Asn275. The segment at 282–290 is involved in fusion and/or binding to host membrane; the sequence is GWMPWRHYT. Asn380, Asn423, Asn497, Asn514, Asn515, and Asn560 each carry an N-linked (GlcNAc...) asparagine; by host glycan. Residues 505 to 516 show a composition bias toward low complexity; the sequence is LLNPNANNNNNT. A disordered region spans residues 505-535; sequence LLNPNANNNNNTTRRRRSLLSVPEPQPTQDG. N-linked (GlcNAc...) asparagine; by host glycosylation is found at Asn727 and Asn749. Hydrophobic membrane proximal region stretches follow at residues 794 to 847 and 823 to 843; these read IDSV…SFLN and AVGT…SGIA. Residues 850–870 form a helical membrane-spanning segment; the sequence is FGGLAIGLLVIAGLVAAFFAY. Over 871-980 the chain is Intravirion; sequence RYVMQIRSNP…NDTMENEKMV (110 aa). The Golgi targeting motif lies at 925–928; sequence YMSM. Asn952 carries N-linked (GlcNAc...) asparagine; by host glycosylation. An Internalization motif motif is present at residues 965 to 968; the sequence is YTRL. Asn971 is a glycosylation site (N-linked (GlcNAc...) asparagine; by host).

This sequence belongs to the herpesviridae glycoprotein B family. As to quaternary structure, homotrimer; disulfide-linked. Binds to heparan sulfate proteoglycans. Interacts with gH/gL heterodimer. In terms of processing, a proteolytic cleavage by host furin generates two subunits that remain linked by disulfide bonds.

It is found in the virion membrane. The protein resides in the host cell membrane. It localises to the host endosome membrane. The protein localises to the host Golgi apparatus membrane. Functionally, envelope glycoprotein that forms spikes at the surface of virion envelope. Essential for the initial attachment to heparan sulfate moieties of the host cell surface proteoglycans. Involved in fusion of viral and cellular membranes leading to virus entry into the host cell. Following initial binding to its host receptors, membrane fusion is mediated by the fusion machinery composed at least of gB and the heterodimer gH/gL. May be involved in the fusion between the virion envelope and the outer nuclear membrane during virion egress. This chain is Envelope glycoprotein B, found in Equine herpesvirus 1 (strain HVS25A) (EHV-1).